Consider the following 257-residue polypeptide: Small ribosomal subunit protein eS1 (257 aa).

Residues 236-257 are disordered; that stretch reads TSAEGEKIERPDDYEPPVQESV. Basic and acidic residues predominate over residues 239-248; the sequence is EGEKIERPDD.

Belongs to the eukaryotic ribosomal protein eS1 family. In terms of assembly, component of the small ribosomal subunit. Mature ribosomes consist of a small (40S) and a large (60S) subunit. The 40S subunit contains about 33 different proteins and 1 molecule of RNA (18S). The 60S subunit contains about 49 different proteins and 3 molecules of RNA (28S, 5.8S and 5S).

It localises to the cytoplasm. This Brugia malayi (Filarial nematode worm) protein is Small ribosomal subunit protein eS1.